The following is a 532-amino-acid chain: Cytochrome P450 monooxygenase pgmC (532 aa).

A helical transmembrane segment spans residues Ile-15–Leu-32. Cys-438 lines the heme pocket.

Belongs to the cytochrome P450 family. It depends on heme as a cofactor.

The protein localises to the membrane. It functions in the pathway pigment biosynthesis. The protein operates within secondary metabolite biosynthesis. Its function is as follows. Cytochrome P450 monooxygenase; part of the gene cluster that mediates the biosynthesis of pleosporalin A, ascomycone A, as well as a third cryptic naphthoquinone derived pigment, all responsible for the coloration of conidia. Involved in the oxidation of fusarubinaldehyde at C-9. PgmC has low substrate-specificity and is also able to use the pgmA product 3-acetonyl-1,6,8-trihydroxy-2-naphthaldehyde as a substrate. The pathway begins with the biosynthesis of the cyclized heptaketide 3-acetonyl-1,6,8-trihydroxy-2-naphthaldehyde by the NR-PKS pgmA. The C-6 hydroxyl group is further methylated by the O-methyltransferase pgmB to yield fusarubinaldehyde which is in turn oxidized by the cytochrome P450 monooxygenase pgmC at C-9. The C-1 hydroxyl group is then methylated spontaneously. Although pgmE, pgmD and pgmH are essential for the production of pleosporalin A, it is not the case for the 2 other final products and it remains difficult to assign a specific function to each enzyme. PgmF and pgmG seem not to be involved in pigment biosynthesis although they were regulated by the cluster-specific transcription factor pgmR. This chain is Cytochrome P450 monooxygenase pgmC, found in Aspergillus terreus (strain NIH 2624 / FGSC A1156).